Reading from the N-terminus, the 372-residue chain is General transcription factor IIH subunit 3 (372 aa).

Positions 40–78 (ISGMNDDNDSSSRYNGSTTIGNNNNNNNNNNSNNNNNVN) are disordered. The segment covering 50 to 60 (SSRYNGSTTIG) has biased composition (polar residues). Positions 61 to 78 (NNNNNNNNNNSNNNNNVN) are enriched in low complexity. The C4-type zinc-finger motif lies at 323 to 340 (CSVCLSIFCGHSSSCSTC).

It belongs to the TFB4 family. As to quaternary structure, component of the 7-subunit TFIIH core complex composed of XPB/repB, XPD/repD, gtf2h1, gtf2h2, gtf2h3, gtf2h4 and gtf2h5, which is active in NER. The core complex associates with the 3-subunit CDK-activating kinase (CAK) module composed of cycH/cyclin H, cdk7 and mnat1 to form the 10-subunit holoenzyme (holo-TFIIH) active in transcription.

Its subcellular location is the nucleus. Component of the general transcription and DNA repair factor IIH (TFIIH) core complex, which is involved in general and transcription-coupled nucleotide excision repair (NER) of damaged DNA and, when complexed to CAK, in RNA transcription by RNA polymerase II. In NER, TFIIH acts by opening DNA around the lesion to allow the excision of the damaged oligonucleotide and its replacement by a new DNA fragment. In transcription, TFIIH has an essential role in transcription initiation. When the pre-initiation complex (PIC) has been established, TFIIH is required for promoter opening and promoter escape. Phosphorylation of the C-terminal tail (CTD) of the largest subunit of RNA polymerase II by the kinase module CAK controls the initiation of transcription. In Dictyostelium discoideum (Social amoeba), this protein is General transcription factor IIH subunit 3 (gtf2h3).